Consider the following 395-residue polypeptide: Elongation factor Tu (395 aa).

The 196-residue stretch at 10 to 205 (KPHVNIGTIG…VDSYIPLPPR (196 aa)) folds into the tr-type G domain. Positions 19-26 (GHVDHGKT) are G1. 19-26 (GHVDHGKT) serves as a coordination point for GTP. Position 26 (T26) interacts with Mg(2+). The interval 60-64 (GITIN) is G2. The interval 81–84 (DCPG) is G3. Residues 81–85 (DCPGH) and 136–139 (NKVD) each bind GTP. The tract at residues 136–139 (NKVD) is G4. Residues 174-176 (SAT) are G5.

Belongs to the TRAFAC class translation factor GTPase superfamily. Classic translation factor GTPase family. EF-Tu/EF-1A subfamily. As to quaternary structure, monomer.

The protein resides in the cytoplasm. It catalyses the reaction GTP + H2O = GDP + phosphate + H(+). Functionally, GTP hydrolase that promotes the GTP-dependent binding of aminoacyl-tRNA to the A-site of ribosomes during protein biosynthesis. The chain is Elongation factor Tu from Terrimonas ferruginea (Flavobacterium ferrugineum).